We begin with the raw amino-acid sequence, 597 residues long: uncharacterized protein (597 aa).

The region spanning Glu378–Leu575 is the VWFA domain.

This is an uncharacterized protein from Treponema pallidum (strain Nichols).